A 945-amino-acid polypeptide reads, in one-letter code: Xylanolytic transcriptional activator xlnR (945 aa).

Low complexity predominate over residues 1–23 (MSTPSIPQFTSSFSPFSSGSHST). 2 disordered regions span residues 1-32 (MSTPSIPQFTSSFSPFSSGSHSTGMAPSQTVG) and 53-118 (AAGT…APVR). The segment covering 73-84 (HTKDQPPFDNEK) has biased composition (basic and acidic residues). A DNA-binding region (zn(2)-C6 fungal-type) is located at residues 125 to 151 (CDQCNQLRTKCDGQHPCAHCIEFGLTC). Disordered regions lie at residues 172-210 (AAAATQGSNGHSGQANASLMGERTSEDSRPGQDVNGTYD) and 559-601 (PPNV…INVT). Residues 176-188 (TQGSNGHSGQANA) are compositionally biased toward polar residues. A compositionally biased stretch (basic and acidic residues) spans 565 to 581 (ARQDGERDGDGEADKRH).

It belongs to the xlnR/xlr1 family.

It is found in the nucleus. Transcriptional activator of the xylanolytic system. Involved in the regulation of extracellular cellulolytic and xylanolytic genes and in the regulation of the intracellular activities of D-xylose catabolic genes in the pentose catabolic pathway (PCP) in response to the presence of D-xylose. Binds to the DNA sequence 5'-GGNTAAA-3'. The polypeptide is Xylanolytic transcriptional activator xlnR (xlnR) (Aspergillus niger).